The primary structure comprises 2474 residues: Polyprotein P1234 (2474 aa).

One can recognise an Alphavirus-like MT domain in the interval 28–259; sequence EPRQVTPNDH…ESRKLLKSWH (232 aa). H37 acts as the For mRNA-capping enzyme nsP1 activity in catalysis. H79, E129, C134, and C141 together coordinate Zn(2+). The interval 295–450 is membrane-binding and oligomerization; that stretch reads GLYGKTTGYA…QKVQAEFDSF (156 aa). Residues C417 and C419 are each lipidated (S-palmitoyl cysteine; by host). A disordered region spans residues 482–502; that stretch reads PYSGDAQEARDAEKEAEEERE. The 153-residue stretch at 690-842 folds into the (+)RNA virus helicase ATP-binding domain; it reads DLTNPPYHEF…HNICTQVYHK (153 aa). An a ribonucleoside 5'-triphosphate-binding site is contributed by 721–728; sequence GVPGSGKS. The 149-residue stretch at 843 to 991 folds into the (+)RNA virus helicase C-terminal domain; it reads SISRRCTLPV…IKEWEVEHAS (149 aa). The Peptidase C9 domain occupies 1004-1327; it reads DTFQNKANVC…NQLNAAFVGQ (324 aa). The nucleolus localization signal stretch occupies residues 1005–1024; sequence TFQNKANVCWAKSLVPILET. C1013 (for cysteine protease nsP2 activity) is an active-site residue. The short motif at 1058-1067 is the Nuclear export signal element; sequence TRMYGVDLDS. H1083 serves as the catalytic For cysteine protease nsP2 activity. The short motif at 1182 to 1186 is the Nuclear localization signal element; sequence PTKRV. The Macro domain occupies 1334–1493; sequence APSYRVKRMD…KISEAIQMRT (160 aa). Positions 1343, 1357, 1365, 1445, 1446, and 1447 each coordinate ADP-D-ribose. The Zn(2+) site is built by C1595, C1597, C1620, and C1638. The segment at 1651–1672 is disordered; it reads RVSPREYRPSQESVQEASTTTS. Residues 1659-1857 are HVD; sequence PSQESVQEAS…TCSDTDDELR (199 aa). Residues 1660 to 1672 show a composition bias toward polar residues; it reads SQESVQEASTTTS. 2 interaction with host CD2AP regions span residues 1726–1739 and 1756–1767; these read VMSTVPVAPPRRRR and PMASVRFFRAEL. The tract at residues 1745–1793 is interaction with host FHL1; the sequence is VTCDEREGNITPMASVRFFRAELCPVVQETAETRDTAMSLQAPPSTATE. The FGDF; binding to host G3BP1 motif lies at 1812-1815; that stretch reads FGDF. The interval 1820–1828 is interaction with host CD2AP; sequence IESLSSELL. Positions 1830-1833 match the FGDF; binding to host G3BP1 motif; the sequence is FGDF. One can recognise a RdRp catalytic domain in the interval 2228-2343; sequence DTVLETDIAS…HGVVSDELMA (116 aa).

As to quaternary structure, homododecamer. The enzyme forms a membrane-associated dodecameric ring with a central channel for the exchange of between the viral replication factories and the host cytoplasm. Interacts with non-structural protein 3. Interacts with RNA-directed RNA polymerase nsP4. Interacts with protease nsP2. Interacts with itself. Interacts with host STING1; this interaction results in inhibition of cGAS-STING signaling and increased levels of palmitoylation and protein stabilization of nsP1. Interacts with host TMEM45B; this interaction leads to viral replication inhibition. In terms of assembly, interacts with mRNA-capping enzyme nsP1. Interacts (via C-terminus) with host G3BP1; this interaction inhibits the formation of host stress granules on viral mRNAs and the nsp3-G3BP1 complexes bind viral RNAs and probably orchestrate the assembly of viral replication complexes. Interacts (via C-terminus) with host G3BP2; this interaction inhibits the formation of host stress granules on viral mRNAs and the nsp3-G3BP2 complexes bind viral RNAs and probably orchestrate the assembly of viral replication complexes. Interacts (via C-terminus) with host NAP1L1. Interacts (via C-terminus) with host NAP1L4. Interacts (via C-terminus) with host DHX9; this interaction allows the recruitment of DHX9 to the plasma membrane, where it associates with viral replication complexes and may play a role in the translation-to-replication switch. Interacts (via C-terminus) with host FHL1 (via LIM domain 1); this interaction is required for viral RNA replication. Interacts (via C-terminus) with host CD2AP; this interaction plays a role in initiation of viral replication. Interacts (via C-terminus) with host SH3KBP1; this interaction plays a role in initiation of viral replication. Interacts with mRNA-capping enzyme nsP1. Interacts with protease nsP2. interacts with itself. Interacts with host TMEM45B; this interaction leads to viral replication inhibition. As to quaternary structure, interacts with RNA-directed RNA polymerase nsP4. Interacts with mRNA-capping enzyme nsP1. Interacts with KPNA1/karyopherin-alpha1; this interaction probably allows the active transport of protease nsP2 into the host nucleus. The cofactor is Mg(2+). Mn(2+) is required as a cofactor. Specific enzymatic cleavages in vivo yield mature proteins. The processing of the polyprotein is temporally regulated. In early stages (1.7 hpi), P1234 is first cleaved in trans through its nsP2 protease activity, releasing P123 and nsP4, which associate to form the early replication complex. At the same time, P1234 is also cut at the nsP1/nsP2 site early in infection but with lower efficiency. After replication of the viral minus-strand RNAs (4 hpi), the polyproteins are cut at the nsP1/nsP2 and nsP2/nsP3 sites very efficiently, preventing accumulation of P123 and P1234 and allowing the formation of the late replication complex. NsP3/nsP4 site is not cleaved anymore and P34 is produced rather than nsP4. Post-translationally, specific enzymatic cleavages in vivo yield mature proteins. The processing of the polyprotein is temporally regulated. In early stages (1.7 hpi), P123 is cleaved at the nsP1/nsP2 site with low efficiency. After replication of the viral minus-strand RNAs (4 hpi), the polyproteins are cut at the nsP1/nsP2 and nsP2/nsP3 sites very efficiently, preventing accumulation of P123 and allowing the formation of the late replication complex. In terms of processing, palmitoylated by host palmitoyltransferases ZDHHC2 and ZDHHC19. Palmitoylation is increased by the interacton with host STING1. Phosphorylated by host on serines and threonines. Post-translationally, ubiquitinated; targets the protein for rapid degradation via the ubiquitin system. Nsp4 is present in extremely low quantities due to low frequency of translation through the amber stop-codon and the degradation by the ubiquitin pathway.

It localises to the host cytoplasmic vesicle membrane. The protein localises to the host cell membrane. It is found in the host cell projection. Its subcellular location is the host filopodium. The protein resides in the host nucleus. It localises to the host cytoplasm. It catalyses the reaction GTP + S-adenosyl-L-methionine = N(7)-methyl-GTP + S-adenosyl-L-homocysteine. The enzyme catalyses N(7)-methyl-GTP + L-histidyl-[protein] = N(tele)-(N(7)-methylguanosine 5'-phospho)-L-histidyl-[protein] + diphosphate. The catalysed reaction is N(tele)-(N(7)-methylguanosine 5'-phospho)-L-histidyl-[protein] + a 5'-end diphospho-(purine-ribonucleoside) in mRNA + H(+) = a 5'-end (N(7)-methyl 5'-triphosphoguanosine)-(purine-ribonucleoside) in mRNA + L-histidyl-[protein]. It carries out the reaction a 5'-end triphospho-ribonucleoside in mRNA + H2O = a 5'-end diphospho-ribonucleoside in mRNA + phosphate + H(+). It catalyses the reaction a ribonucleoside 5'-triphosphate + H2O = a ribonucleoside 5'-diphosphate + phosphate + H(+). The enzyme catalyses ATP + H2O = ADP + phosphate + H(+). The catalysed reaction is RNA(n) + a ribonucleoside 5'-triphosphate = RNA(n+1) + diphosphate. It carries out the reaction 4-O-(ADP-D-ribosyl)-L-aspartyl-[protein] + H2O = L-aspartyl-[protein] + ADP-D-ribose + H(+). It catalyses the reaction 5-O-(ADP-D-ribosyl)-L-glutamyl-[protein] + H2O = L-glutamyl-[protein] + ADP-D-ribose + H(+). The enzyme catalyses RNA(n) + ATP = RNA(n)-3'-adenine ribonucleotide + diphosphate. The catalysed reaction is ADP-alpha-D-ribose 1''-phosphate + H2O = ADP-D-ribose + phosphate. In terms of biological role, inactive precursor of the viral replicase, which is activated by cleavages carried out by the viral protease nsP2. Functionally, the early replication complex formed by the polyprotein P123 and nsP4 synthesizes minus-strand RNAs. As soon P123 is cleaved into mature proteins, the plus-strand RNAs synthesis begins. Cytoplasmic capping enzyme that catalyzes two virus-specific reactions: methyltransferase and guanylyltransferase. mRNA-capping is necessary since all viral RNAs are synthesized in the cytoplasm, and host capping enzymes are restricted to the nucleus. The enzymatic reaction involves a covalent link between 7-methyl-GMP and nsP1, whereas eukaryotic capping enzymes form a covalent complex only with GMP. nsP1 capping consists in the following reactions: GTP is first methylated into 7-methyl-GMP and then is covalently linked to nsP1 to form the m7GMp-nsP1 complex from which 7-methyl-GMP complex is transferred to the mRNA to create the cap structure. NsP1 is also needed for the initiation of the minus-strand RNAs synthesis. At the initiation of virus replication, mediates the assembly of the viral replication complex made of the non-structural proteins, the association of this complex with the inner face of the plasma membrane and the formation of membranous spherules that serve as replication complex factories. Forms the neck of these spherules with a central channel for mediating communication and the passage of RNA, nucleotides, and small proteins between the viral replication complex and the host cytoplasm. Palmitoylated nsP1 is remodeling host cell cytoskeleton, and induces filopodium-like structure formation at the surface of the host cell. Its function is as follows. Multifunctional protein whose N-terminus is part of the RNA polymerase complex and displays NTPase, RNA triphosphatase and helicase activities. NTPase and RNA triphosphatase are involved in viral RNA capping and helicase keeps a check on the dsRNA replication intermediates. The C-terminus harbors a protease that specifically cleaves the polyproteins and releases the mature proteins. Required for the shutoff of minus-strand RNAs synthesis. Specifically inhibits the host IFN response by promoting the nuclear export of host STAT1. Also inhibits host transcription by inducing the rapid proteasome-dependent degradation of POLR2A, a catalytic subunit of the RNAPII complex. The resulting inhibition of cellular protein synthesis serves to ensure maximal viral gene expression and to evade host immune response. In terms of biological role, seems to be essential for minus-strand RNAs and subgenomic 26S mRNAs synthesis. Displays mono-ADP-ribosylhydrolase activity. ADP-ribosylation is a post-translational modification that controls various processes of the host cell and the virus probably needs to revert it for optimal viral replication. Binds proteins of G3BP family and sequesters them into the viral RNA replication complexes thereby inhibiting the formation of host stress granules on viral mRNAs. The nsp3-G3BP complexes bind viral RNAs and probably orchestrate the assembly of viral replication complexes, thanks to the ability of G3BP family members to self-assemble and bind DNA. Functionally, RNA dependent RNA polymerase. Replicates genomic and antigenomic RNA by recognizing replications specific signals. The early replication complex formed by the polyprotein P123 and nsP4 synthesizes minus-strand RNAs. The late replication complex composed of fully processed nsP1-nsP4 is responsible for the production of genomic and subgenomic plus-strand RNAs. This is Polyprotein P1234 from Chikungunya virus (strain S27-African prototype) (CHIKV).